Reading from the N-terminus, the 156-residue chain is Small ribosomal subunit protein uS7 (156 aa).

The protein belongs to the universal ribosomal protein uS7 family. In terms of assembly, part of the 30S ribosomal subunit. Contacts proteins S9 and S11.

One of the primary rRNA binding proteins, it binds directly to 16S rRNA where it nucleates assembly of the head domain of the 30S subunit. Is located at the subunit interface close to the decoding center, probably blocks exit of the E-site tRNA. In Clostridium acetobutylicum (strain ATCC 824 / DSM 792 / JCM 1419 / IAM 19013 / LMG 5710 / NBRC 13948 / NRRL B-527 / VKM B-1787 / 2291 / W), this protein is Small ribosomal subunit protein uS7.